Consider the following 717-residue polypeptide: PAN2-PAN3 deadenylation complex subunit PAN3 (717 aa).

The C3H1-type zinc-finger motif lies at 8-37; that stretch reads WARDVPCRNVIIYGFCKKKTEGCPFKHDDD. A disordered region spans residues 37–100; it reads DDIATPTSTP…HTGSKSQVPK (64 aa). Residues 62 to 90 are compositionally biased toward low complexity; that stretch reads PSKISVSSLPSLNSQPSSTAPTSAPNATA. Over residues 91–100 the composition is skewed to polar residues; sequence HTGSKSQVPK. A pseudokinase domain region spans residues 323 to 585; that stretch reads QLFPSGGNLP…ATIIEKYIGL (263 aa). Residues arginine 378, 428-435, and 482-483 each bind ATP; these read DYYPNATS and DK. Residues 586–624 are a coiled coil; the sequence is DVVFKVMEAQQTYSEYAENVLSRELENGRLFRLICKLNF. The interval 625–717 is knob domain; sequence IFGRVENRLD…VDKTFRAMTL (93 aa).

The protein belongs to the protein kinase superfamily. PAN3 family. In terms of assembly, homodimer. Forms a heterotrimer with a catalytic subunit PAN2 to form the poly(A)-nuclease (PAN) deadenylation complex. Interacts (via PAM-2 motif) with poly(A)-binding protein PAB1 (via PABC domain), conferring substrate specificity of the enzyme complex.

It is found in the cytoplasm. Functionally, regulatory subunit of the poly(A)-nuclease (PAN) deadenylation complex, one of two cytoplasmic mRNA deadenylases involved in mRNA turnover. PAN specifically shortens poly(A) tails of RNA and the activity is stimulated by poly(A)-binding protein PAB1. PAN deadenylation is followed by rapid degradation of the shortened mRNA tails by the CCR4-NOT complex. Deadenylated mRNAs are then degraded by two alternative mechanisms, namely exosome-mediated 3'-5' exonucleolytic degradation, or deadenylation-dependent mRNA decaping and subsequent 5'-3' exonucleolytic degradation by XRN1. May also be involved in post-transcriptional maturation of mRNA poly(A) tails. PAN3 acts as a positive regulator for PAN activity, recruiting the catalytic subunit PAN2 to mRNA via its interaction with RNA and with PAB1. In Candida glabrata (strain ATCC 2001 / BCRC 20586 / JCM 3761 / NBRC 0622 / NRRL Y-65 / CBS 138) (Yeast), this protein is PAN2-PAN3 deadenylation complex subunit PAN3.